The sequence spans 433 residues: Serine--tRNA ligase (433 aa).

235–237 (TSE) contributes to the L-serine binding site. Position 266 to 268 (266 to 268 (RSE)) interacts with ATP. E289 contacts L-serine. 353–356 (EISS) contacts ATP. S388 lines the L-serine pocket.

The protein belongs to the class-II aminoacyl-tRNA synthetase family. Type-1 seryl-tRNA synthetase subfamily. As to quaternary structure, homodimer. The tRNA molecule binds across the dimer.

Its subcellular location is the cytoplasm. The catalysed reaction is tRNA(Ser) + L-serine + ATP = L-seryl-tRNA(Ser) + AMP + diphosphate + H(+). It catalyses the reaction tRNA(Sec) + L-serine + ATP = L-seryl-tRNA(Sec) + AMP + diphosphate + H(+). It participates in aminoacyl-tRNA biosynthesis; selenocysteinyl-tRNA(Sec) biosynthesis; L-seryl-tRNA(Sec) from L-serine and tRNA(Sec): step 1/1. Its function is as follows. Catalyzes the attachment of serine to tRNA(Ser). Is also able to aminoacylate tRNA(Sec) with serine, to form the misacylated tRNA L-seryl-tRNA(Sec), which will be further converted into selenocysteinyl-tRNA(Sec). This is Serine--tRNA ligase from Burkholderia pseudomallei (strain 668).